The primary structure comprises 127 residues: NADPH-dependent 7-cyano-7-deazaguanine reductase (127 aa).

C40 functions as the Thioimide intermediate in the catalytic mechanism. D47 acts as the Proton donor in catalysis. Residues 62 to 64 (VEL) and 81 to 82 (HE) each bind substrate.

This sequence belongs to the GTP cyclohydrolase I family. QueF type 1 subfamily.

The protein localises to the cytoplasm. It catalyses the reaction 7-aminomethyl-7-carbaguanine + 2 NADP(+) = 7-cyano-7-deazaguanine + 2 NADPH + 3 H(+). It functions in the pathway tRNA modification; tRNA-queuosine biosynthesis. In terms of biological role, catalyzes the NADPH-dependent reduction of 7-cyano-7-deazaguanine (preQ0) to 7-aminomethyl-7-deazaguanine (preQ1). In Campylobacter lari (strain RM2100 / D67 / ATCC BAA-1060), this protein is NADPH-dependent 7-cyano-7-deazaguanine reductase.